The chain runs to 98 residues: MFEQRVNSDVLTVSTVNSQDQVTQKPLRDSVKQALKNYFAQLNGQDVNDLYELVLAEVEQPLLDMVMQYTRGNQTRAAQMMGINRGTLRKKLKKYGMN.

Positions 74–93 (QTRAAQMMGINRGTLRKKLK) form a DNA-binding region, H-T-H motif.

It belongs to the transcriptional regulatory Fis family. Homodimer.

Activates ribosomal RNA transcription. Plays a direct role in upstream activation of rRNA promoters. This is DNA-binding protein Fis from Sodalis glossinidius (strain morsitans).